The chain runs to 340 residues: Guanine nucleotide-binding protein G(I)/G(S)/G(T) subunit beta-3 (340 aa).

7 WD repeats span residues 53–83, 95–125, 141–170, 182–212, 224–254, 268–298, and 310–340; these read GHLA…IVWD, LRSS…SIYS, AHTG…ALWD, GHTG…KLWD, GHES…RLFD, SIIC…NIWD, and GHDN…KVWN.

Belongs to the WD repeat G protein beta family. In terms of assembly, g proteins are composed of 3 units, alpha, beta and gamma. Interacts with RASD2.

The protein localises to the cytoplasm. The protein resides in the perinuclear region. In terms of biological role, guanine nucleotide-binding proteins (G proteins) are involved as a modulator or transducer in various transmembrane signaling systems. The beta and gamma chains are required for the GTPase activity, for replacement of GDP by GTP, and for G protein-effector interaction. The polypeptide is Guanine nucleotide-binding protein G(I)/G(S)/G(T) subunit beta-3 (GNB3) (Canis lupus familiaris (Dog)).